A 919-amino-acid chain; its full sequence is Phosphoenolpyruvate carboxylase (919 aa).

Active-site residues include histidine 138 and lysine 579.

The protein belongs to the PEPCase type 1 family. The cofactor is Mg(2+).

The catalysed reaction is oxaloacetate + phosphate = phosphoenolpyruvate + hydrogencarbonate. Forms oxaloacetate, a four-carbon dicarboxylic acid source for the tricarboxylic acid cycle. This Corynebacterium glutamicum (Brevibacterium saccharolyticum) protein is Phosphoenolpyruvate carboxylase.